The sequence spans 231 residues: ATP synthase subunit a (231 aa).

The next 5 helical transmembrane spans lie at 14–34 (GFLK…VLAV), 78–98 (YLGF…CTVI), 107–127 (SLST…FFGI), 174–194 (MIIG…MTAL), and 196–216 (LLTG…YIAA).

This sequence belongs to the ATPase A chain family. In terms of assembly, F-type ATPases have 2 components, CF(1) - the catalytic core - and CF(0) - the membrane proton channel. CF(1) has five subunits: alpha(3), beta(3), gamma(1), delta(1), epsilon(1). CF(0) has three main subunits: a(1), b(2) and c(9-12). The alpha and beta chains form an alternating ring which encloses part of the gamma chain. CF(1) is attached to CF(0) by a central stalk formed by the gamma and epsilon chains, while a peripheral stalk is formed by the delta and b chains.

The protein localises to the cell inner membrane. Functionally, key component of the proton channel; it plays a direct role in the translocation of protons across the membrane. In Albidiferax ferrireducens (strain ATCC BAA-621 / DSM 15236 / T118) (Rhodoferax ferrireducens), this protein is ATP synthase subunit a.